Reading from the N-terminus, the 606-residue chain is Chaperone protein DnaK (606 aa).

A Phosphothreonine; by autocatalysis modification is found at T174. Residues 576 to 606 (QAAGSANPGGSQGTSQGNVYEADYKVEDDNK) form a disordered region. Basic and acidic residues predominate over residues 597 to 606 (ADYKVEDDNK).

The protein belongs to the heat shock protein 70 family.

Acts as a chaperone. This chain is Chaperone protein DnaK, found in Caldanaerobacter subterraneus subsp. tengcongensis (strain DSM 15242 / JCM 11007 / NBRC 100824 / MB4) (Thermoanaerobacter tengcongensis).